The following is a 379-amino-acid chain: Polycomb group protein FIE2 (379 aa).

WD repeat units lie at residues D85–S128, G131–I171, G177–D217, V243–G280, V292–I333, and Q340–R378.

It belongs to the WD repeat ESC family. Widely expressed. Expressed in the embryo sac before pollination. After pollination, its expression persists, predominantly in the embryo and at lower levels in the endosperm.

Its subcellular location is the nucleus. Its function is as follows. Polycomb group (PcG) protein. PcG proteins act by forming multiprotein complexes, which are required to maintain the transcriptionally repressive state of homeotic genes throughout development. PcG proteins are not required to initiate repression, but to maintain it during later stages of development. They probably act via the methylation of histones, rendering chromatin heritably changed in its expressibility. This Zea mays (Maize) protein is Polycomb group protein FIE2 (FIE2).